The primary structure comprises 628 residues: Leucine-rich repeat and fibronectin type-III domain-containing protein 3 (628 aa).

The signal sequence occupies residues 1–16; the sequence is MAVLPLLLCLLPLAPA. The Extracellular segment spans residues 17-540; it reads SSPPQPASPS…APHAPFLGGT (524 aa). The region spanning 19–59 is the LRRNT domain; the sequence is PPQPASPSPCPRRCRCQTQSLPLSVLCPGAGLLFVPPSLDR. 7 LRR repeats span residues 60 to 83, 84 to 105, 108 to 129, 132 to 153, 157 to 178, 181 to 202, and 205 to 226; these read RAAE…ANMT, GLLH…AFSD, ALRA…QLRG, NLRH…ALDD, TLED…ALGR, NVNT…AFSR, and KLAR…PLFS. Residues 249–295 form the LRRCT domain; it reads NPLHCNCELVWLRRLAREDDLEACASPPALGGRYFWAVGEEEFVCEP. An Ig-like domain is found at 295–382; that stretch reads PPVVTHRSPP…GEATAAVELT (88 aa). A disulfide bond links cysteine 317 and cysteine 366. Asparagine 348 and asparagine 393 each carry an N-linked (GlcNAc...) asparagine glycan. A disordered region spans residues 380-433; sequence ELTVGPPPPPQLANSTSCDPPRDGEPDALTPPSAASASASAKAAEAGPPTDRGV. The span at 410-428 shows a compositional bias: low complexity; that stretch reads PPSAASASASAKAAEAGPP. The Fibronectin type-III domain occupies 427-525; the sequence is PPTDRGVQVT…GCNRFSTEPA (99 aa). A helical membrane pass occupies residues 541–561; that stretch reads MIIALGGVIVASVLVFIFVLL. Topologically, residues 562 to 628 are cytoplasmic; sequence MRYKVHGGQP…WGPSHEPMGP (67 aa). The interval 570-609 is disordered; sequence QPPGKTKASAPVSSVCSQTNGALGPMPAPPAPEPSAPRAH. Positions 580 to 590 are enriched in polar residues; that stretch reads PVSSVCSQTNG. The span at 595–604 shows a compositional bias: pro residues; that stretch reads MPAPPAPEPS.

Belongs to the LRFN family. Can form heteromeric complexes with LRFN1, LRFN2, LRFN4 and LRFN5. Able to form homomeric complexes across cell junctions, between adjacent cells. Does not interact with DLG4. In terms of processing, N-glycosylated.

It is found in the cell membrane. Its subcellular location is the cell projection. The protein localises to the axon. The protein resides in the dendrite. It localises to the synapse. It is found in the presynaptic cell membrane. Its subcellular location is the postsynaptic cell membrane. Cell adhesion molecule that mediates homophilic cell-cell adhesion in a Ca(2+)-independent manner. Promotes neurite outgrowth in hippocampal neurons. The polypeptide is Leucine-rich repeat and fibronectin type-III domain-containing protein 3 (LRFN3) (Bos taurus (Bovine)).